Reading from the N-terminus, the 734-residue chain is Photosystem I P700 chlorophyll a apoprotein A2 (734 aa).

Helical transmembrane passes span 46–69 (IFASHFGQLAIIFLWTSGNLFHVA), 135–158 (LYTGALFLLFLSAISLIAGWLHLQ), 175–199 (LNHHLSGLFGVSSLAWTGHLVHVAI), 273–291 (IAHHHLAIAFVFLVAGHMY), 330–353 (IHFQLGLALASLGVITSLVAQHMY), 369–395 (AALYTHHQYIAGFIMTGAFAHGAIFFI), 417–439 (AIKSHLSWASLFLGFHTLGLYVH), and 517–535 (FLVHHAIALGLHTTTLILV). Cys559 and Cys568 together coordinate [4Fe-4S] cluster. Transmembrane regions (helical) follow at residues 575 to 596 (AFYLAVFWMLNTIGWVTFYWHW) and 643 to 665 (LSVWAWMFLFGHLVWATGFMFLI). Chlorophyll a is bound by residues His654, Met662, and Tyr670. Residue Trp671 participates in phylloquinone binding. Residues 707 to 727 (LVGLAHFSVGYIFTYAAFLIA) traverse the membrane as a helical segment.

The protein belongs to the PsaA/PsaB family. The PsaA/B heterodimer binds the P700 chlorophyll special pair and subsequent electron acceptors. PSI consists of a core antenna complex that captures photons, and an electron transfer chain that converts photonic excitation into a charge separation. The eukaryotic PSI reaction center is composed of at least 11 subunits. P700 is a chlorophyll a/chlorophyll a' dimer, A0 is one or more chlorophyll a, A1 is one or both phylloquinones and FX is a shared 4Fe-4S iron-sulfur center. serves as cofactor.

Its subcellular location is the plastid. It localises to the chloroplast thylakoid membrane. The enzyme catalyses reduced [plastocyanin] + hnu + oxidized [2Fe-2S]-[ferredoxin] = oxidized [plastocyanin] + reduced [2Fe-2S]-[ferredoxin]. In terms of biological role, psaA and PsaB bind P700, the primary electron donor of photosystem I (PSI), as well as the electron acceptors A0, A1 and FX. PSI is a plastocyanin-ferredoxin oxidoreductase, converting photonic excitation into a charge separation, which transfers an electron from the donor P700 chlorophyll pair to the spectroscopically characterized acceptors A0, A1, FX, FA and FB in turn. Oxidized P700 is reduced on the lumenal side of the thylakoid membrane by plastocyanin. In Amborella trichopoda, this protein is Photosystem I P700 chlorophyll a apoprotein A2.